The following is a 960-amino-acid chain: Anoctamin-1 (960 aa).

The Cytoplasmic portion of the chain corresponds to 1 to 333 (MRVPEKYSTL…FGEKVGLYFA (333 aa)). Positions 92 to 115 (TRSVRQDQPLPGKGSPVDAGSPEV) are disordered. At Ser-196 the chain carries Phosphoserine. A helical membrane pass occupies residues 334–354 (WLGAYTQMLIPASIVGVIVFL). Over 355–406 (YGCATVDENIPSMEMCDQRYNITMCPLCDKTCSYWKMSSACATARASHLFDN) the chain is Extracellular. Intrachain disulfides connect Cys-370/Cys-395, Cys-379/Cys-836, Cys-382/Cys-386, and Cys-625/Cys-630. Residues 407-427 (PATVFFSVFMALWAATFMEHW) form a helical membrane-spanning segment. Glu-425 is a Ca(2+) binding site. Residues 428 to 493 (KRKQMRLNYR…RDRFPAYFTN (66 aa)) are Cytoplasmic-facing. Residues 494–514 (LVSIIFMIAVTFAIVLGVIIY) form a helical membrane-spanning segment. Topologically, residues 515–542 (RISTAAALAMNSSPSVRSNIRVTVTATA) are extracellular. A helical transmembrane segment spans residues 543–563 (VIINLVVIILLDEVYGCIARW). Topologically, residues 564 to 581 (LTKIEVPKTEKSFEERLT) are cytoplasmic. Residues 582 to 602 (FKAFLLKFVNSYTPIFYVAFF) form a helical membrane-spanning segment. Residues 603–631 (KGRFVGRPGDYVYIFRSFRMEECAPGGCL) are Extracellular-facing. A helical transmembrane segment spans residues 632–652 (MELCIQLSIIMLGKQLIQNNL). Ca(2+) contacts are provided by Asn-651, Glu-654, Glu-702, Glu-705, Glu-734, and Asp-738. The Cytoplasmic portion of the chain corresponds to 653–699 (FEIGIPKMKKFIRYLKLRRQSPSDREEYVKRKQRYEVDFNLEPFAGL). The next 2 membrane-spanning stretches (helical) occupy residues 700-720 (TPEY…VASF) and 721-741 (PLAP…DAKK). Topologically, residues 742-758 (FVTELRRPVAIRAKDIG) are cytoplasmic. The helical transmembrane segment at 759–779 (IWYNILRGVGKLAVIINAFVI) threads the bilayer. The Extracellular portion of the chain corresponds to 780 to 866 (SFTSDFIPRL…FWAVLAARLA (87 aa)). Asn-806 carries N-linked (GlcNAc...) asparagine glycosylation. The helical transmembrane segment at 867–887 (FVIVFQNLVMFMSDFVDWVIP) threads the bilayer. 2 residues coordinate Ca(2+): Asp-883 and Asp-888. Topologically, residues 888 to 960 (DIPKDISQQI…PSYEYHGDAL (73 aa)) are cytoplasmic. The interval 928-960 (PRDVPCNNHSPTTHPEAGDGSPVPSYEYHGDAL) is disordered.

Belongs to the anoctamin family. Homodimer. Interacts with CFTR. Interacts with TRPV4. In terms of tissue distribution, expressed at the apical surface of the vomeronasal epithelium (at protein level). Expressed in the lateral and septal nasal glands (at protein level). Highly expressed in pulmonary bronchiole epithelial cells, pancreatic and submandibular gland acinar cells, kidney proximal tubule, all retinal cell layers, most sensory cells of dorsal root ganglia, Leydig cells and spermatocytes (at protein level). In the dorsal root ganglia, detected in small-diameter nociceptive neurons and in larger myelinated neurons (at protein level). In the dorsal root ganglia, expressed in MrgprA3-positive neurons (at protein level). In the developing brain, highly expressed in the ventricular zone and subventricular zone at 12.5 dpc and 14.5 dpc where it is detected in radial glial cells but not in neurons with expression dramatically decreased at P1 (at protein level). Highly expressed in the endometrial stroma (at protein level). In taste buds of the vallate papillae, expressed in the apical region of type I taste cells (at protein level). In the kidney, expressed in the collecting duct (at protein level). In the retina, strongly expressed in the outer and inner plexiform layers, weakly expressed in some somata in the inner nuclear layer and ganglion cell layer and not expressed in the outer nuclear layer (at protein level). Expressed in various retinal neurons including rod bipolar cells (at protein level). Expressed in eye, brain, myometrium and endometrium with higher levels in endometrium than myometrium in estrus and day 18 pregnant mice. Not detected in uterine smooth muscle cells. Expressed at high levels in the thyroid gland and gastrointestinal muscles.

It is found in the apical cell membrane. The protein resides in the presynapse. It catalyses the reaction chloride(in) = chloride(out). ATP and calmodulin are essential for its activation. Channel activity is inhibited by CFTR protein and by chloride inhibitors such as niflumic acid (NFA) and 4,4'-diisothiocyanatostilbene-2,2'-disulfonic acid (DIDS). Activated by heat with activation seen at temperatures above 44 degrees Celsius. Activated by BDNF in radial glial cells. In terms of biological role, calcium-activated chloride channel (CaCC). Plays a role in transepithelial anion transport and smooth muscle contraction. Required for the normal functioning of the interstitial cells of Cajal (ICCs) which generate electrical pacemaker activity in gastrointestinal smooth muscles. Acts as a major contributor to basal and stimulated chloride conductance in airway epithelial cells and plays an important role in tracheal cartilage development. Required for CFTR activation by enhancing endoplasmic reticulum Ca(2+) store release and is also required for CFTR membrane expression. Required for basal and ATP-dependent mucus secretion in airways and intestine, probably by controlling exocytosis of mucus-filled granules by providing Ca(2+) to an apical signaling compartment. Contributes to airway mucus expression induced by interleukins IL3 and IL8 and by the asthma-associated protein CLCA1 and is required for expression of mucin MUC5AC. However, was shown in another study not to be required for MUC5AC expression. Plays a role in the propagation of Ca(2+) waves in Kolliker's organ in the cochlea and contributes to the refinement of auditory brainstem circuitries prior to hearing onset. In vomeronasal sensory neurons, modulates spontaneous firing patterns in the absence of stimuli as well as the firing pattern of pheromone-evoked activity. Responsible for calcium-activated chloride channel activity in type I taste cells of the vallate papillae. Acts as a heat sensor in nociceptive neurons. In dorsal root ganglion neurons, plays a role in mediating non-histaminergic Mas-related G-protein coupled receptor (MRGPR)-dependent itching, acting as a downstream effector of MRGPRs. In the developing brain, required for the Ca(2+)-dependent process extension of radial glial cells. The chain is Anoctamin-1 (Ano1) from Mus musculus (Mouse).